The following is a 170-amino-acid chain: Flavodoxin (170 aa).

Residues 4-165 form the Flavodoxin-like domain; sequence IGLFFGTQTG…RIQAWVAQLK (162 aa).

It belongs to the flavodoxin family. FMN is required as a cofactor.

In terms of biological role, low-potential electron donor to a number of redox enzymes. The sequence is that of Flavodoxin (isiB) from Picosynechococcus sp. (strain ATCC 27264 / PCC 7002 / PR-6) (Agmenellum quadruplicatum).